Consider the following 441-residue polypeptide: G2/mitotic-specific cyclin-2 (441 aa).

Belongs to the cyclin family. Cyclin AB subfamily. Interacts with the CDC2 and CDK2 protein kinases to form a serine/threonine kinase holoenzyme complex. The cyclin subunit imparts substrate specificity to the complex.

Functionally, essential for the control of the cell cycle at the G2/M (mitosis) transition. G2/M cyclins accumulate steadily during G2 and are abruptly destroyed at mitosis. The sequence is that of G2/mitotic-specific cyclin-2 from Antirrhinum majus (Garden snapdragon).